A 500-amino-acid chain; its full sequence is Lycopene beta cyclase, chloroplastic (500 aa).

The N-terminal 81 residues, 1 to 81 (MDTLLKTPNK…ELPMYDPSKG (81 aa)), are a transit peptide targeting the chloroplast. 86 to 114 (LAVVGGGPAGLAVAQQVSEAGLSVVSIDP) provides a ligand contact to NAD(+).

Belongs to the lycopene cyclase family.

It is found in the plastid. It localises to the chloroplast. It catalyses the reaction a carotenoid psi-end group = a carotenoid beta-end derivative. It participates in carotenoid biosynthesis; beta-carotene biosynthesis. It functions in the pathway carotenoid biosynthesis; beta-zeacarotene biosynthesis. Functionally, catalyzes the double cyclization reaction which converts lycopene to beta-carotene and neurosporene to beta-zeacarotene. This Nicotiana tabacum (Common tobacco) protein is Lycopene beta cyclase, chloroplastic (LCY1).